A 433-amino-acid polypeptide reads, in one-letter code: Tol-Pal system protein TolB (433 aa).

The first 21 residues, 1–21, serve as a signal peptide directing secretion; the sequence is MINLFRGLLVVLCFASAMVAA.

This sequence belongs to the TolB family. As to quaternary structure, the Tol-Pal system is composed of five core proteins: the inner membrane proteins TolA, TolQ and TolR, the periplasmic protein TolB and the outer membrane protein Pal. They form a network linking the inner and outer membranes and the peptidoglycan layer.

The protein localises to the periplasm. In terms of biological role, part of the Tol-Pal system, which plays a role in outer membrane invagination during cell division and is important for maintaining outer membrane integrity. This chain is Tol-Pal system protein TolB, found in Pseudomonas syringae pv. tomato (strain ATCC BAA-871 / DC3000).